The chain runs to 1133 residues: Protein cordon-bleu (1133 aa).

Residues 1–11 (MKARAPPPPGK) are compositionally biased toward pro residues. The tract at residues 1 to 25 (MKARAPPPPGKPAAQNVHSEQKLPH) is disordered. A phosphoserine mark is found at Ser-31, Ser-34, Ser-196, Ser-219, Ser-256, and Ser-278. Disordered stretches follow at residues 246 to 393 (AEHL…SVNG) and 442 to 568 (QGGI…GQAS). Positions 272–301 (CVTTPNSPSLHSRSLTLGPSLSLGNISGMS) are enriched in polar residues. The KKRRAP 1 motif lies at 307–312 (KKRRAP). Phosphoserine occurs at positions 330 and 333. The KKRRAP 2 motif lies at 340-345 (KKRRAP). The span at 345-358 (PAPPPPQPPPPSPV) shows a compositional bias: pro residues. The residue at position 356 (Ser-356) is a Phosphoserine. Residues 361–371 (NRKEDKEENRK) show a composition bias toward basic and acidic residues. 2 stretches are compositionally biased toward polar residues: residues 382–393 (TDTSSLTSSVNG) and 442–464 (QGGI…QPFI). Ser-447 carries the phosphoserine modification. Basic and acidic residues predominate over residues 512–524 (STDDPKAKDKDKM). A Phosphoserine modification is found at Ser-614. Positions 664 to 720 (APSTTITATSEKPQRDETKAGFTLTTPEQQPASQEYGAPPEEDRSRPHSAVSCPVKV) are disordered. Composition is skewed to polar residues over residues 665-674 (PSTTITATSE) and 686-696 (TLTTPEQQPAS). Position 924 is a phosphoserine (Ser-924). 2 disordered regions span residues 942 to 961 (PSPL…SSIF) and 990 to 1018 (HTSG…YVEA). WH2 domains follow at residues 981 to 1001 (LHSA…LRKT) and 1021 to 1041 (ERSA…LRKV). A compositionally biased stretch (basic and acidic residues) spans 993–1010 (GGRDKLRKTAEQASEGRP). Positions 1063–1091 (DKPQQEDRGLPPPPALPPPSTPASQVPSA) are disordered. The segment covering 1072 to 1083 (LPPPPALPPPST) has biased composition (pro residues). Ser-1099 carries the post-translational modification Phosphoserine. The WH2 3 domain maps to 1109-1129 (ARQALMDAIRSGTGAARLRKV).

As to quaternary structure, identified in a complex composed of ACTA1, COBL, GSN AND TMSB4X. Identified in a complex composed of COBL, PACSIN1 and WASL. Interacts with PACSIN1, PACSIN2 and PACSIN3. Interacts (via WH2 domains) with actin monomers. Interacts with both PACSIN1 and DBNL. As to expression, detected in brain (at protein level).

The protein resides in the cell membrane. Its subcellular location is the cytoplasm. It is found in the cytoskeleton. The protein localises to the cell projection. It localises to the ruffle. The protein resides in the cytosol. Functionally, plays an important role in the reorganization of the actin cytoskeleton. Binds to and sequesters actin monomers (G actin). Nucleates actin polymerization by assembling three actin monomers in cross-filament orientation and thereby promotes growth of actin filaments at the barbed end. Can also mediate actin depolymerization at barbed ends and severing of actin filaments. Promotes formation of cell ruffles. Regulates dendrite branching in Purkinje cells. Regulates neuron morphogenesis and increases branching of axons and dendrites. This Rattus norvegicus (Rat) protein is Protein cordon-bleu (Cobl).